We begin with the raw amino-acid sequence, 362 residues long: Peptide chain release factor 1 (362 aa).

Gln-240 carries the N5-methylglutamine modification.

Belongs to the prokaryotic/mitochondrial release factor family. In terms of processing, methylated by PrmC. Methylation increases the termination efficiency of RF1.

It localises to the cytoplasm. In terms of biological role, peptide chain release factor 1 directs the termination of translation in response to the peptide chain termination codons UAG and UAA. The sequence is that of Peptide chain release factor 1 from Bifidobacterium longum (strain NCC 2705).